Consider the following 119-residue polypeptide: Large ribosomal subunit protein bL19 (119 aa).

It belongs to the bacterial ribosomal protein bL19 family.

Functionally, this protein is located at the 30S-50S ribosomal subunit interface and may play a role in the structure and function of the aminoacyl-tRNA binding site. The chain is Large ribosomal subunit protein bL19 from Psychromonas ingrahamii (strain DSM 17664 / CCUG 51855 / 37).